Consider the following 931-residue polypeptide: ORF4 polyprotein (931 aa).

Post-translationally, proteolytic processing of ORF4 polyprotein yields the VP4a, VP4b and VP4c capsid proteins.

The protein localises to the virion. Functionally, ORF4 polyprotein codes for VP4a, VP4b, and VP4c, three of the four proteins that self-assemble to form the icosahedral capsid. The capsid is made of VP3 (coded by ORF3), VP4a, VP4b and VP4c. The protein is ORF4 polyprotein of Drosophila melanogaster (Fruit fly).